Reading from the N-terminus, the 505-residue chain is Cytochrome P450 monooxygenase iliC (505 aa).

The helical transmembrane segment at 6-26 threads the bilayer; the sequence is LIAQHSLTLTIASSVLLVFLL. Position 453 (C453) interacts with heme.

Belongs to the cytochrome P450 family. The cofactor is heme.

It localises to the membrane. The catalysed reaction is (3E,5S)-3-[(2E,4E,8S,10E,12Z)-1-hydroxy-4,8-dimethyltetradeca-2,4,10,12-tetraen-1-ylidene]-5-[(4-hydroxyphenyl)methyl]pyrrolidine-2,4-dione + reduced [NADPH--hemoprotein reductase] + O2 = 3-[(2E,4E,8S,10E,12Z)-4,8-dimethyltetradeca-2,4,10,12-tetraenoyl]-4-hydroxy-5-(4-hydroxyphenyl)-1,2-dihydropyridin-2-one + oxidized [NADPH--hemoprotein reductase] + 2 H2O. The protein operates within mycotoxin biosynthesis. In terms of biological role, cytochrome P450 monooxygenase; part of the gene cluster that mediates the biosynthesis of ilicicolin H, a 4-hydroxy-2-pyridonealkaloid that has potent and broad antifungal activities by inhibiting the mitochondrial respiration chain. IliC catalyzes the ring expansion of the tetramate intermediate to the acyclic 2-pyridone intermediate that contains the trans bis-diene chain. The biosynthesis of ilicicolin H starts with formation of the tetramic acid by the hybrid PKS-NRPS synthetase iliA with the partnering trans-enoyl reductase iliB since iliA lacks a designated enoylreductase (ER) domain. The cytochrome P450 monooxygenase iliC then catalyzes the ring expansion of the tetramate to the acyclic 2-pyridone. The pericyclase iliD further converts the acyclic 2-pyridone into 8-epi-ilicicolin H. 8-epi-ilicicolin H might then spontaneously convert to ilicicolin H since ilicicolin H is produced in the absence of the epimerase iliE, in contrast to what was observed for the Talaromyces variabilis ilicolin H biosynthetic pathway. The sequence is that of Cytochrome P450 monooxygenase iliC from Neonectria sp. (strain DH2).